Reading from the N-terminus, the 591-residue chain is Aspartate--tRNA ligase (591 aa).

Position 176 (Glu-176) interacts with L-aspartate. Residues 200 to 203 (QILK) form an aspartate region. Arg-222 provides a ligand contact to L-aspartate. ATP contacts are provided by residues 222 to 224 (RDE) and Gln-231. Position 450 (His-450) interacts with L-aspartate. Residue Glu-484 coordinates ATP. Position 491 (Arg-491) interacts with L-aspartate. 536–539 (GLDR) is an ATP binding site.

It belongs to the class-II aminoacyl-tRNA synthetase family. Type 1 subfamily. As to quaternary structure, homodimer.

The protein resides in the cytoplasm. The enzyme catalyses tRNA(Asp) + L-aspartate + ATP = L-aspartyl-tRNA(Asp) + AMP + diphosphate. Functionally, catalyzes the attachment of L-aspartate to tRNA(Asp) in a two-step reaction: L-aspartate is first activated by ATP to form Asp-AMP and then transferred to the acceptor end of tRNA(Asp). This is Aspartate--tRNA ligase from Listeria monocytogenes serotype 4a (strain HCC23).